The following is a 946-amino-acid chain: Bifunctional lysine-specific demethylase and histidyl-hydroxylase NO66 (946 aa).

Positions 14 to 435 are disordered; the sequence is YRGSATSKNY…TSAASKKNTV (422 aa). Composition is skewed to polar residues over residues 17–28 and 37–46; these read SATSKNYVQKGT and AKNNNRNLAS. Low complexity predominate over residues 59 to 73; it reads SGSYSDGDNGSSSSS. Positions 99–110 are enriched in polar residues; sequence TLNNHSSQSSPE. Basic and acidic residues predominate over residues 117-128; the sequence is ESLKRRNDEAEG. Residues 169 to 186 are compositionally biased toward polar residues; it reads TLNSHSSQSSPETPANTR. Positions 187 to 198 are enriched in basic and acidic residues; that stretch reads ESLKRRTDEAEG. Polar residues predominate over residues 239–256; the sequence is TLNSHSYQSSPETPANTR. Positions 257–268 are enriched in basic and acidic residues; it reads ESLKRRTDEAEG. Residue Thr-309 is modified to Phosphothreonine. The segment covering 309–327 has biased composition (polar residues); it reads TLNSHSSQSSPETPANTRE. Positions 328 to 338 are enriched in basic and acidic residues; the sequence is SLNRRNYEAEG. Phosphoserine is present on Ser-339. The segment covering 379–397 has biased composition (polar residues); it reads TLNSHSSQSSPETPANTRE. The span at 398-408 shows a compositional bias: basic and acidic residues; sequence SLNRRNYEAEG. Residues 416 to 433 show a composition bias toward polar residues; it reads RTSSTPVGQSTSAASKKN. The region spanning 606–742 is the JmjC domain; it reads NPSSYLVQLR…NLMEKLMPLV (137 aa). Fe cation-binding residues include His-646, Asp-648, and His-708.

The protein belongs to the ROX family. NO66 subfamily. Fe(2+) serves as cofactor.

Its subcellular location is the nucleus. It carries out the reaction N(6),N(6)-dimethyl-L-lysyl(36)-[histone H3] + 2 2-oxoglutarate + 2 O2 = L-lysyl(36)-[histone H3] + 2 formaldehyde + 2 succinate + 2 CO2. Oxygenase that can act as both a histone lysine demethylase and a ribosomal histidine hydroxylase. Specifically demethylates 'Lys-4' (H3K4me) and 'Lys-36' (H3K36me) of histone H3, thereby playing a central role in histone code. This is Bifunctional lysine-specific demethylase and histidyl-hydroxylase NO66 from Drosophila pseudoobscura pseudoobscura (Fruit fly).